An 81-amino-acid polypeptide reads, in one-letter code: Costars family protein ABRACL (81 aa).

This sequence belongs to the costars family.

This chain is Costars family protein ABRACL (abracl), found in Xenopus laevis (African clawed frog).